A 283-amino-acid polypeptide reads, in one-letter code: Phosphatidylserine decarboxylase proenzyme (283 aa).

Active-site charge relay system; for autoendoproteolytic cleavage activity residues include D89, H146, and S249. The active-site Schiff-base intermediate with substrate; via pyruvic acid; for decarboxylase activity is S249. Pyruvic acid (Ser); by autocatalysis is present on S249.

This sequence belongs to the phosphatidylserine decarboxylase family. PSD-B subfamily. Prokaryotic type I sub-subfamily. Heterodimer of a large membrane-associated beta subunit and a small pyruvoyl-containing alpha subunit. Pyruvate serves as cofactor. Is synthesized initially as an inactive proenzyme. Formation of the active enzyme involves a self-maturation process in which the active site pyruvoyl group is generated from an internal serine residue via an autocatalytic post-translational modification. Two non-identical subunits are generated from the proenzyme in this reaction, and the pyruvate is formed at the N-terminus of the alpha chain, which is derived from the carboxyl end of the proenzyme. The autoendoproteolytic cleavage occurs by a canonical serine protease mechanism, in which the side chain hydroxyl group of the serine supplies its oxygen atom to form the C-terminus of the beta chain, while the remainder of the serine residue undergoes an oxidative deamination to produce ammonia and the pyruvoyl prosthetic group on the alpha chain. During this reaction, the Ser that is part of the protease active site of the proenzyme becomes the pyruvoyl prosthetic group, which constitutes an essential element of the active site of the mature decarboxylase.

It is found in the cell membrane. The enzyme catalyses a 1,2-diacyl-sn-glycero-3-phospho-L-serine + H(+) = a 1,2-diacyl-sn-glycero-3-phosphoethanolamine + CO2. It functions in the pathway phospholipid metabolism; phosphatidylethanolamine biosynthesis; phosphatidylethanolamine from CDP-diacylglycerol: step 2/2. Catalyzes the formation of phosphatidylethanolamine (PtdEtn) from phosphatidylserine (PtdSer). The protein is Phosphatidylserine decarboxylase proenzyme of Legionella pneumophila subsp. pneumophila (strain Philadelphia 1 / ATCC 33152 / DSM 7513).